A 164-amino-acid polypeptide reads, in one-letter code: V-type proton ATPase subunit c' (164 aa).

Over 1 to 15 (MTDDLVNEYAPAFAP) the chain is Lumenal. Residues 16 to 36 (FFGFAGCAAAMILSSLGAAIG) traverse the membrane as a helical segment. Over 37 to 58 (TAKSGIGISGIGTFRPELIMKS) the chain is Cytoplasmic. Residues 59–79 (LIPVVMSGILAVYGLVVAVLV) form a helical membrane-spanning segment. Residues 80–97 (AGGLSPTEEYTLFNGFMH) lie on the Lumenal side of the membrane. A helical membrane pass occupies residues 98-118 (LAAGLCVGFACLSSGYAIGIV). At 119 to 135 (GDVGVRKFMHQPRLFVG) the chain is on the cytoplasmic side. The helical transmembrane segment at 136–156 (IVLILIFAEVLGLYGMIIALI) threads the bilayer. Residues 157 to 164 (LNTRGSGN) are Lumenal-facing.

The protein belongs to the V-ATPase proteolipid subunit family. In terms of assembly, V-ATPase is a heteromultimeric enzyme composed of a peripheral catalytic V1 complex (components A to H) attached to an integral membrane V0 proton pore complex (components: a, c, c', c'', d, e, f and VOA1). The decameric c-ring forms the proton-conducting pore, and is composed of eight proteolipid subunits c, one subunit c' and one subunit c''.

The protein localises to the vacuole membrane. In terms of biological role, proton-conducting pore forming subunit of the V0 complex of vacuolar(H+)-ATPase (V-ATPase), a multisubunit enzyme composed of a peripheral complex (V1) that hydrolyzes ATP and a membrane integral complex (V0) that translocates protons. V-ATPase is responsible for acidifying and maintaining the pH of intracellular compartments. The sequence is that of V-type proton ATPase subunit c' (VMA11) from Eremothecium gossypii (strain ATCC 10895 / CBS 109.51 / FGSC 9923 / NRRL Y-1056) (Yeast).